The following is a 338-amino-acid chain: Ketol-acid reductoisomerase (NADP(+)) (338 aa).

The region spanning 1 to 181 (MQVYYDKDCD…GGGRTGIIET (181 aa)) is the KARI N-terminal Rossmann domain. NADP(+) is bound by residues 24-27 (FGSQ), arginine 47, serine 50, serine 52, and 82-85 (DEFQ). Histidine 107 is a catalytic residue. Glycine 133 lines the NADP(+) pocket. The KARI C-terminal knotted domain maps to 182 to 327 (TFRDECETDL…RKLRAMMPWI (146 aa)). Aspartate 190, glutamate 194, glutamate 226, and glutamate 230 together coordinate Mg(2+). Serine 251 lines the substrate pocket.

It belongs to the ketol-acid reductoisomerase family. The cofactor is Mg(2+).

The enzyme catalyses (2R)-2,3-dihydroxy-3-methylbutanoate + NADP(+) = (2S)-2-acetolactate + NADPH + H(+). It catalyses the reaction (2R,3R)-2,3-dihydroxy-3-methylpentanoate + NADP(+) = (S)-2-ethyl-2-hydroxy-3-oxobutanoate + NADPH + H(+). Its pathway is amino-acid biosynthesis; L-isoleucine biosynthesis; L-isoleucine from 2-oxobutanoate: step 2/4. It functions in the pathway amino-acid biosynthesis; L-valine biosynthesis; L-valine from pyruvate: step 2/4. In terms of biological role, involved in the biosynthesis of branched-chain amino acids (BCAA). Catalyzes an alkyl-migration followed by a ketol-acid reduction of (S)-2-acetolactate (S2AL) to yield (R)-2,3-dihydroxy-isovalerate. In the isomerase reaction, S2AL is rearranged via a Mg-dependent methyl migration to produce 3-hydroxy-3-methyl-2-ketobutyrate (HMKB). In the reductase reaction, this 2-ketoacid undergoes a metal-dependent reduction by NADPH to yield (R)-2,3-dihydroxy-isovalerate. This Hydrogenovibrio crunogenus (strain DSM 25203 / XCL-2) (Thiomicrospira crunogena) protein is Ketol-acid reductoisomerase (NADP(+)).